The primary structure comprises 537 residues: Tegument protein BRRF2 (537 aa).

Disordered regions lie at residues Leu325–Asp474 and Gly486–Ile537. The segment covering Lys334 to Asn347 has biased composition (polar residues). Residues Ser423–Gly441 are compositionally biased toward low complexity. A compositionally biased stretch (acidic residues) spans Asp492 to Glu517.

This sequence belongs to the lymphocryptovirus BRRF2 family.

It localises to the virion tegument. This is Tegument protein BRRF2 from Homo sapiens (Human).